We begin with the raw amino-acid sequence, 206 residues long: MGEHWALGPEAGSSLLLCSALLAVGCALGLRLGRGRSAVERWVLAWLCYDSLVHFVLEGAFVYLSIVGNVADSQGLIASLWKEYGKADTRWLYSDPTVVSLEILTVVLDGLLALVLIYAIVKEKYYRHFVQIVLCVCELYGCWMTFFPEWLVGSPSLNTSSWLYLWVYLVFFNGLWVLIPGLLLWQSWVELKKRDSQEANLAKKHK.

Transmembrane regions (helical) follow at residues 10–30 (EAGSSLLLCSALLAVGCALGL), 42–62 (WVLAWLCYDSLVHFVLEGAFV), 101–121 (LEILTVVLDGLLALVLIYAIV), and 165–185 (LWVYLVFFNGLWVLIPGLLLW). Residues 39-184 (VERWVLAWLC…LWVLIPGLLL (146 aa)) form the EXPERA domain.

It belongs to the EBP family. Homodimer.

The protein localises to the endoplasmic reticulum membrane. Its function is as follows. Does not possess sterol isomerase activity and does not bind sigma ligands. The chain is Emopamil-binding protein-like (Ebpl) from Mus musculus (Mouse).